A 554-amino-acid chain; its full sequence is uncharacterized protein (554 aa).

Ca(2+)-binding residues include Asp327 and Asn328.

The protein belongs to the sulfatase family. The cofactor is Ca(2+).

The protein resides in the cytoplasm. The protein localises to the nucleus. This is an uncharacterized protein from Schizosaccharomyces pombe (strain 972 / ATCC 24843) (Fission yeast).